The primary structure comprises 171 residues: Large ribosomal subunit protein uL10 (171 aa).

Belongs to the universal ribosomal protein uL10 family. As to quaternary structure, part of the ribosomal stalk of the 50S ribosomal subunit. The N-terminus interacts with L11 and the large rRNA to form the base of the stalk. The C-terminus forms an elongated spine to which L12 dimers bind in a sequential fashion forming a multimeric L10(L12)X complex.

Functionally, forms part of the ribosomal stalk, playing a central role in the interaction of the ribosome with GTP-bound translation factors. The sequence is that of Large ribosomal subunit protein uL10 from Cereibacter sphaeroides (strain ATCC 17023 / DSM 158 / JCM 6121 / CCUG 31486 / LMG 2827 / NBRC 12203 / NCIMB 8253 / ATH 2.4.1.) (Rhodobacter sphaeroides).